The following is a 426-amino-acid chain: Peptidoglycan DD-endopeptidase ShyB (426 aa).

Residues 1-21 (MGQFRFLALIVAVLCFSVALF) form the signal peptide. Residues 32–48 (SYSVPLNQSVNTSQPPS) show a composition bias toward polar residues. Positions 32–55 (SYSVPLNQSVNTSQPPSSEMVPSD) are disordered. 3 residues coordinate Zn(2+): His-291, Asp-295, and His-372.

It belongs to the peptidase M23B family. Monomer. The cofactor is Zn(2+).

Its subcellular location is the periplasm. Its pathway is cell wall degradation; peptidoglycan degradation. With respect to regulation, not inhibited by metal chelator EDTA. Its function is as follows. Cell wall peptidoglycan (PG) DD-endopeptidase, which may act as a substitute for other zinc-dependent PG endopeptidases (ShyA and ShyC) during zinc starvation. Hydrolyzes peptide cross-links which covalently connect adjacent PG strands probably to allow insertion of new glycans and thus cell wall expansion. Degrades purified whole PG sacculi in vitro. It is unclear how it is able to function in low zinc environments, but that may possibly be due to binding zinc with very high affinity, utilizing an alternative metal cofactor or that it may function independently of a bound metal cofactor. The protein is Peptidoglycan DD-endopeptidase ShyB of Vibrio cholerae serotype O1 (strain ATCC 39315 / El Tor Inaba N16961).